Consider the following 292-residue polypeptide: Hemin import ATP-binding protein HmuV (292 aa).

One can recognise an ABC transporter domain in the interval 38–271 (LRADGIAVTR…ELLTRVYGHP (234 aa)). 70 to 77 (GPNGAGKS) contacts ATP.

This sequence belongs to the ABC transporter superfamily. Heme (hemin) importer (TC 3.A.1.14.5) family. As to quaternary structure, the complex is composed of two ATP-binding proteins (HmuV), two transmembrane proteins (HmuU) and a solute-binding protein (HmuT).

The protein localises to the cell membrane. Part of the ABC transporter complex HmuTUV involved in hemin import. Responsible for energy coupling to the transport system. This Rhodococcus jostii (strain RHA1) protein is Hemin import ATP-binding protein HmuV.